Reading from the N-terminus, the 389-residue chain is DNA replication and repair protein RecF (389 aa).

30–37 (GPNGFGKT) serves as a coordination point for ATP.

It belongs to the RecF family.

Its subcellular location is the cytoplasm. The RecF protein is involved in DNA metabolism; it is required for DNA replication and normal SOS inducibility. RecF binds preferentially to single-stranded, linear DNA. It also seems to bind ATP. In Mycolicibacterium gilvum (strain PYR-GCK) (Mycobacterium gilvum (strain PYR-GCK)), this protein is DNA replication and repair protein RecF.